Here is a 471-residue protein sequence, read N- to C-terminus: UDP-N-acetylmuramate--L-alanine ligase (471 aa).

122–128 (GTHGKTT) lines the ATP pocket.

Belongs to the MurCDEF family.

Its subcellular location is the cytoplasm. It catalyses the reaction UDP-N-acetyl-alpha-D-muramate + L-alanine + ATP = UDP-N-acetyl-alpha-D-muramoyl-L-alanine + ADP + phosphate + H(+). The protein operates within cell wall biogenesis; peptidoglycan biosynthesis. Cell wall formation. This chain is UDP-N-acetylmuramate--L-alanine ligase, found in Cutibacterium acnes (strain DSM 16379 / KPA171202) (Propionibacterium acnes).